Reading from the N-terminus, the 174-residue chain is Large ribosomal subunit protein uL15 (174 aa).

Disordered regions lie at residues 1–57 and 147–174; these read MKLH…QMRI and PWVVERRSRSRGPNPPRHSRKAETPQKA. Residues 21–35 are compositionally biased toward gly residues; the sequence is RGIGSGKGKTGGKGM.

It belongs to the universal ribosomal protein uL15 family. In terms of assembly, part of the 50S ribosomal subunit.

Binds to the 23S rRNA. The polypeptide is Large ribosomal subunit protein uL15 (Roseiflexus sp. (strain RS-1)).